The following is a 294-amino-acid chain: 33 kDa chaperonin (294 aa).

Cystine bridges form between Cys-237–Cys-239 and Cys-270–Cys-273.

It belongs to the HSP33 family. Post-translationally, under oxidizing conditions two disulfide bonds are formed involving the reactive cysteines. Under reducing conditions zinc is bound to the reactive cysteines and the protein is inactive.

It localises to the cytoplasm. Functionally, redox regulated molecular chaperone. Protects both thermally unfolding and oxidatively damaged proteins from irreversible aggregation. Plays an important role in the bacterial defense system toward oxidative stress. The sequence is that of 33 kDa chaperonin from Geobacillus kaustophilus (strain HTA426).